The chain runs to 392 residues: L-rhamnonate dehydratase (392 aa).

His22 and Arg48 together coordinate substrate. Positions 214, 240, and 268 each coordinate Mg(2+). Catalysis depends on His318, which acts as the Proton acceptor. Residue Glu338 coordinates substrate.

The protein belongs to the mandelate racemase/muconate lactonizing enzyme family. RhamD subfamily. Homooctamer; tetramer of dimers. Mg(2+) serves as cofactor.

It catalyses the reaction L-rhamnonate = 2-dehydro-3-deoxy-L-rhamnonate + H2O. In terms of biological role, catalyzes the dehydration of L-rhamnonate to 2-keto-3-deoxy-L-rhamnonate (KDR). The sequence is that of L-rhamnonate dehydratase from Paraburkholderia xenovorans (strain LB400).